Reading from the N-terminus, the 174-residue chain is uncharacterized protein (174 aa).

Belongs to the IIV-6 196R family.

This is an uncharacterized protein from Acheta domesticus (House cricket).